The primary structure comprises 216 residues: Somatotropin (216 aa).

Positions 1–26 are cleaved as a signal peptide; that stretch reads MAAGSWTAGLLAFALLCLPWPQEASA. His45 is a binding site for Zn(2+). An intrachain disulfide couples Cys78 to Cys189. Ser131 bears the Phosphoserine mark. Glu198 contacts Zn(2+). An intrachain disulfide couples Cys206 to Cys214.

This sequence belongs to the somatotropin/prolactin family.

The protein localises to the secreted. Plays an important role in growth control. Its major role in stimulating body growth is to stimulate the liver and other tissues to secrete IGF1. It stimulates both the differentiation and proliferation of myoblasts. It also stimulates amino acid uptake and protein synthesis in muscle and other tissues. The chain is Somatotropin (GH1) from Oryctolagus cuniculus (Rabbit).